Reading from the N-terminus, the 477-residue chain is Bifunctional protein HldE (477 aa).

The interval 1–318 (MKVNLPAFER…ENAVRGRADT (318 aa)) is ribokinase. Position 195 to 198 (195 to 198 (NLSE)) interacts with ATP. Asp-264 is a catalytic residue. The cytidylyltransferase stretch occupies residues 344-477 (MTNGVFDILH…IKKIQTESEK (134 aa)).

This sequence in the N-terminal section; belongs to the carbohydrate kinase PfkB family. The protein in the C-terminal section; belongs to the cytidylyltransferase family. Homodimer.

The catalysed reaction is D-glycero-beta-D-manno-heptose 7-phosphate + ATP = D-glycero-beta-D-manno-heptose 1,7-bisphosphate + ADP + H(+). The enzyme catalyses D-glycero-beta-D-manno-heptose 1-phosphate + ATP + H(+) = ADP-D-glycero-beta-D-manno-heptose + diphosphate. Its pathway is nucleotide-sugar biosynthesis; ADP-L-glycero-beta-D-manno-heptose biosynthesis; ADP-L-glycero-beta-D-manno-heptose from D-glycero-beta-D-manno-heptose 7-phosphate: step 1/4. It participates in nucleotide-sugar biosynthesis; ADP-L-glycero-beta-D-manno-heptose biosynthesis; ADP-L-glycero-beta-D-manno-heptose from D-glycero-beta-D-manno-heptose 7-phosphate: step 3/4. Functionally, catalyzes the phosphorylation of D-glycero-D-manno-heptose 7-phosphate at the C-1 position to selectively form D-glycero-beta-D-manno-heptose-1,7-bisphosphate. In terms of biological role, catalyzes the ADP transfer from ATP to D-glycero-beta-D-manno-heptose 1-phosphate, yielding ADP-D-glycero-beta-D-manno-heptose. This Salmonella paratyphi A (strain ATCC 9150 / SARB42) protein is Bifunctional protein HldE.